The following is an 85-amino-acid chain: Large ribosomal subunit protein bL27 (85 aa).

Belongs to the bacterial ribosomal protein bL27 family.

The protein is Large ribosomal subunit protein bL27 of Campylobacter curvus (strain 525.92).